Consider the following 2551-residue polypeptide: Piezo-type mechanosensitive ion channel component (2551 aa).

The next 8 membrane-spanning stretches (helical) occupy residues 5–25 (YACM…AALM), 27–47 (PVGI…VPLA), 56–76 (VTAF…GHIT), 106–126 (FIDL…LVFA), 204–226 (IHFE…FAAV), 231–250 (VPGG…WATC), 256–276 (GFAL…LSIV), and 320–340 (LSLD…ALAL). The tract at residues 354 to 375 (STRKARTPQPLESGSSVAPSVT) is disordered. The segment covering 363–375 (PLESGSSVAPSVT) has biased composition (polar residues). The next 9 helical transmembrane spans lie at 395-415 (TTTS…GFIY), 424-444 (ILMM…LLLS), 463-483 (PFIV…GMDL), 516-536 (VPLI…RQFF), 548-568 (LADF…SYLI), 588-608 (LLVR…AITG), 611-631 (MTGF…VFQS), 639-659 (IMYG…ILIY), and 695-715 (FLHL…VHYF). Residues 731–741 (GSAQQKPTETT) show a composition bias toward polar residues. A disordered region spans residues 731–772 (GSAQQKPTETTALEPAPSKRRGSAGSLRKSQGPSAEAAPGAT). The next 12 helical transmembrane spans lie at 819 to 839 (IAAF…FVGF), 857 to 877 (LISF…IEYL), 910 to 930 (LMSL…HAVI), 973 to 993 (LNFG…VSTI), 994 to 1014 (TYRQ…LLLL), 1022 to 1042 (IWGV…IVLV), 1071 to 1091 (GALH…LVIL), 1152 to 1172 (VLCG…TNIA), 1174 to 1194 (LLAL…SDFY), 1198 to 1218 (IHTI…NILI), 1239 to 1259 (WLVH…QIML), and 1275 to 1295 (ITHQ…IFQL). 2 disordered regions span residues 1426–1521 (NITE…AKDS) and 1592–1658 (ESDE…PQQQ). Positions 1430–1448 (SEMKMQRRKTLYDKSKDAP) are enriched in basic and acidic residues. Low complexity predominate over residues 1466 to 1477 (ATASSSASPAPT). The segment covering 1497–1511 (QTSKETSDSKSKMEV) has biased composition (basic and acidic residues). 2 stretches are compositionally biased toward low complexity: residues 1621–1634 (PTST…TTTP) and 1644–1658 (LQPL…PQQQ). The next 4 membrane-spanning stretches (helical) occupy residues 1718–1738 (ISSW…VVFI), 1741–1761 (VVNA…WGTL), 1770–1790 (FWVT…IFQF), and 1817–1837 (AHYA…RYLL). The disordered stretch occupies residues 1854-1876 (FTKPTASIDERDDSDNLSQPDSR). Transmembrane regions (helical) follow at residues 1937-1957 (ALMF…FTAF), 1979-1999 (IPFL…RALY), 2008-2028 (IIFH…VVPA), 2033-2053 (TFNS…YMLL), 2075-2095 (FSMV…LYEL), 2151-2171 (IMGG…LCLF), and 2431-2451 (TFSF…VLLA). Residues 2522–2551 (EYVDDDGDTDSIPSRMSVRRPEQLQPQQPQ) are disordered.

This sequence belongs to the PIEZO (TC 1.A.75) family.

It localises to the cell membrane. In terms of biological role, component of a mechanosensitive channel required for rapidly adapting mechanically activated (MA) currents. Plays a major role in nociception (response to strong or painful touch). Required for maintaining the mechanosensitivity of tarsal bristle mechanosensors. During their evalulation of potential egg-laying sites, females determine the softest substrate for their eggs first by making a coarse evaluation of substrate hardness using mechanosensitive channels nan and Piezo in the leg tarsal bristles, followed by a much finer assessment using nan, iav and Tmc mechanosensitive channels on the labellum. Acts in the nompC- and nan-expressing neurons of the female leg tarsals, to sense the mild differences in egg-laying substrate stiffness. This Drosophila melanogaster (Fruit fly) protein is Piezo-type mechanosensitive ion channel component.